The sequence spans 378 residues: Erythronate-4-phosphate dehydrogenase (378 aa).

Residues Ser-45 and Thr-66 each contribute to the substrate site. NAD(+) contacts are provided by Asp-146 and Thr-175. Residue Arg-208 is part of the active site. Asp-232 is a binding site for NAD(+). Glu-237 is a catalytic residue. The active-site Proton donor is His-254. An NAD(+)-binding site is contributed by Gly-257. Tyr-258 is a binding site for substrate.

This sequence belongs to the D-isomer specific 2-hydroxyacid dehydrogenase family. PdxB subfamily. Homodimer.

Its subcellular location is the cytoplasm. It catalyses the reaction 4-phospho-D-erythronate + NAD(+) = (R)-3-hydroxy-2-oxo-4-phosphooxybutanoate + NADH + H(+). Its pathway is cofactor biosynthesis; pyridoxine 5'-phosphate biosynthesis; pyridoxine 5'-phosphate from D-erythrose 4-phosphate: step 2/5. In terms of biological role, catalyzes the oxidation of erythronate-4-phosphate to 3-hydroxy-2-oxo-4-phosphonooxybutanoate. In Escherichia coli (strain K12 / MC4100 / BW2952), this protein is Erythronate-4-phosphate dehydrogenase.